Reading from the N-terminus, the 385-residue chain is Chaperone protein DnaJ (385 aa).

One can recognise a J domain in the interval 3–68 (DYYEILGVTR…QKRAAYDRFG (66 aa)). The CR-type zinc-finger motif lies at 135 to 213 (GAEVEITVPA…CHGHGQVRRE (79 aa)). C148, C151, C165, C168, C187, C190, C201, and C204 together coordinate Zn(2+). CXXCXGXG motif repeat units lie at residues 148 to 155 (CEVCEGSG), 165 to 172 (CGTCGGAG), 187 to 194 (CPRCGGSG), and 201 to 208 (CSNCHGHG).

The protein belongs to the DnaJ family. As to quaternary structure, homodimer. Zn(2+) serves as cofactor.

It is found in the cytoplasm. In terms of biological role, participates actively in the response to hyperosmotic and heat shock by preventing the aggregation of stress-denatured proteins and by disaggregating proteins, also in an autonomous, DnaK-independent fashion. Unfolded proteins bind initially to DnaJ; upon interaction with the DnaJ-bound protein, DnaK hydrolyzes its bound ATP, resulting in the formation of a stable complex. GrpE releases ADP from DnaK; ATP binding to DnaK triggers the release of the substrate protein, thus completing the reaction cycle. Several rounds of ATP-dependent interactions between DnaJ, DnaK and GrpE are required for fully efficient folding. Also involved, together with DnaK and GrpE, in the DNA replication of plasmids through activation of initiation proteins. The protein is Chaperone protein DnaJ of Caulobacter vibrioides (strain ATCC 19089 / CIP 103742 / CB 15) (Caulobacter crescentus).